A 400-amino-acid polypeptide reads, in one-letter code: uncharacterized protein (400 aa).

Positions 112–126 (SESTAQIEKKPRKPL) are enriched in basic and acidic residues. The disordered stretch occupies residues 112–151 (SESTAQIEKKPRKPLDSVGLLEGDRNKRKKSPQMNDFNIK).

This is an uncharacterized protein from Homo sapiens (Human).